Consider the following 340-residue polypeptide: GTPase Obg (340 aa).

Positions 1–159 constitute an Obg domain; the sequence is MKFLDQAKVY…RTLWLRLKLI (159 aa). One can recognise an OBG-type G domain in the interval 160–327; it reads ADAGIIGLPN…LLRAGAHIIE (168 aa). Residues 166–173, 191–195, 212–215, 279–282, and 308–310 contribute to the GTP site; these read GLPNAGKS, FTTLY, DIPG, SQID, and SAV. Positions 173 and 193 each coordinate Mg(2+).

The protein belongs to the TRAFAC class OBG-HflX-like GTPase superfamily. OBG GTPase family. In terms of assembly, monomer. The cofactor is Mg(2+).

The protein resides in the cytoplasm. An essential GTPase which binds GTP, GDP and possibly (p)ppGpp with moderate affinity, with high nucleotide exchange rates and a fairly low GTP hydrolysis rate. Plays a role in control of the cell cycle, stress response, ribosome biogenesis and in those bacteria that undergo differentiation, in morphogenesis control. This chain is GTPase Obg, found in Bartonella henselae (strain ATCC 49882 / DSM 28221 / CCUG 30454 / Houston 1) (Rochalimaea henselae).